Consider the following 793-residue polypeptide: Phenylalanine--tRNA ligase beta subunit (793 aa).

The tRNA-binding domain maps to 39–148 (AKPFTGVVVG…EDAPVGLNIR (110 aa)). In terms of domain architecture, B5 spans 400–476 (PKREAIELNQ…RIHGYDNIQI (77 aa)). 4 residues coordinate Mg(2+): aspartate 454, aspartate 460, glutamate 463, and glutamate 464. The 94-residue stretch at 698–791 (SRFPSVRRDI…LENTYQATLR (94 aa)) folds into the FDX-ACB domain.

It belongs to the phenylalanyl-tRNA synthetase beta subunit family. Type 1 subfamily. As to quaternary structure, tetramer of two alpha and two beta subunits. The cofactor is Mg(2+).

It localises to the cytoplasm. It catalyses the reaction tRNA(Phe) + L-phenylalanine + ATP = L-phenylalanyl-tRNA(Phe) + AMP + diphosphate + H(+). This chain is Phenylalanine--tRNA ligase beta subunit, found in Acinetobacter baylyi (strain ATCC 33305 / BD413 / ADP1).